A 263-amino-acid chain; its full sequence is Endonuclease 8 (263 aa).

Pro-2 serves as the catalytic Schiff-base intermediate with DNA. The active-site Proton donor is Glu-3. Lys-53 serves as the catalytic Proton donor; for beta-elimination activity. DNA is bound by residues Gln-70, Arg-125, and Asn-169. An FPG-type zinc finger spans residues 229 to 263 (KVFHRDGELCERCGGIIEKTTLSSRPFYWCPGCQH). Arg-253 functions as the Proton donor; for delta-elimination activity in the catalytic mechanism.

The protein belongs to the FPG family. Zn(2+) is required as a cofactor.

It catalyses the reaction 2'-deoxyribonucleotide-(2'-deoxyribose 5'-phosphate)-2'-deoxyribonucleotide-DNA = a 3'-end 2'-deoxyribonucleotide-(2,3-dehydro-2,3-deoxyribose 5'-phosphate)-DNA + a 5'-end 5'-phospho-2'-deoxyribonucleoside-DNA + H(+). Involved in base excision repair of DNA damaged by oxidation or by mutagenic agents. Acts as a DNA glycosylase that recognizes and removes damaged bases. Has a preference for oxidized pyrimidines, such as thymine glycol, 5,6-dihydrouracil and 5,6-dihydrothymine. Has AP (apurinic/apyrimidinic) lyase activity and introduces nicks in the DNA strand. Cleaves the DNA backbone by beta-delta elimination to generate a single-strand break at the site of the removed base with both 3'- and 5'-phosphates. This Escherichia coli O7:K1 (strain IAI39 / ExPEC) protein is Endonuclease 8.